A 495-amino-acid polypeptide reads, in one-letter code: Ferruginol synthase (495 aa).

Residue methionine 1 is a topological domain, lumenal. Residues 2-22 (DSFPLLAALFFIAATITFLSF) form a helical membrane-spanning segment. At 23-495 (RRRRNLPPGP…PLRIIPIVKS (473 aa)) the chain is on the cytoplasmic side. A heme-binding site is contributed by cysteine 437.

This sequence belongs to the cytochrome P450 family. It depends on heme as a cofactor. Expression is more abundant in the rhizome.

It localises to the endoplasmic reticulum membrane. The catalysed reaction is abieta-8,11,13-triene + reduced [NADPH--hemoprotein reductase] + O2 = ferruginol + oxidized [NADPH--hemoprotein reductase] + H2O + H(+). Its function is as follows. Cytochrome P450 enzyme (CYP) which catalyzes a unique two-electron oxidation cascade on abieta-8,11,13-triene to produce ferruginol, an intermediate in tanshinone biosynthesis. This chain is Ferruginol synthase, found in Salvia miltiorrhiza (Chinese sage).